Consider the following 212-residue polypeptide: Glycerol-3-phosphate acyltransferase (212 aa).

A run of 4 helical transmembrane segments spans residues 3-23 (ILLAALVAYLIGSVSFAVVVS), 78-98 (DVAVAWVAIAVFLGHLYPVFF), 115-135 (AVHPVLGLATALTWLIVAFFF), and 155-177 (FLFGTGHNPVAWAVLAMSVLLVW).

This sequence belongs to the PlsY family. Probably interacts with PlsX.

It localises to the cell inner membrane. It carries out the reaction an acyl phosphate + sn-glycerol 3-phosphate = a 1-acyl-sn-glycero-3-phosphate + phosphate. The protein operates within lipid metabolism; phospholipid metabolism. Functionally, catalyzes the transfer of an acyl group from acyl-phosphate (acyl-PO(4)) to glycerol-3-phosphate (G3P) to form lysophosphatidic acid (LPA). This enzyme utilizes acyl-phosphate as fatty acyl donor, but not acyl-CoA or acyl-ACP. The polypeptide is Glycerol-3-phosphate acyltransferase (Burkholderia lata (strain ATCC 17760 / DSM 23089 / LMG 22485 / NCIMB 9086 / R18194 / 383)).